The chain runs to 217 residues: Yop proteins translocation protein R (217 aa).

Helical transmembrane passes span 11-31, 53-73, 157-177, and 181-201; these read IIVL…TSFV, MAMY…VGFA, IGFL…NILL, and MMMV…FVLL.

It belongs to the FliP/MopC/SpaP family.

It localises to the cell membrane. Its function is as follows. Component of the yop secretion machinery. May have a role in the negative pathway regulation of yop expression controlled by calcium. This Yersinia pestis protein is Yop proteins translocation protein R (yscR).